The chain runs to 286 residues: UDP-3-O-acyl-N-acetylglucosamine deacetylase (286 aa).

Positions 79, 237, and 241 each coordinate Zn(2+). The Proton donor role is filled by His-264.

Belongs to the LpxC family. Zn(2+) is required as a cofactor.

It catalyses the reaction a UDP-3-O-[(3R)-3-hydroxyacyl]-N-acetyl-alpha-D-glucosamine + H2O = a UDP-3-O-[(3R)-3-hydroxyacyl]-alpha-D-glucosamine + acetate. It functions in the pathway glycolipid biosynthesis; lipid IV(A) biosynthesis; lipid IV(A) from (3R)-3-hydroxytetradecanoyl-[acyl-carrier-protein] and UDP-N-acetyl-alpha-D-glucosamine: step 2/6. Its function is as follows. Catalyzes the hydrolysis of UDP-3-O-myristoyl-N-acetylglucosamine to form UDP-3-O-myristoylglucosamine and acetate, the committed step in lipid A biosynthesis. The chain is UDP-3-O-acyl-N-acetylglucosamine deacetylase from Chlamydia trachomatis serovar A (strain ATCC VR-571B / DSM 19440 / HAR-13).